The primary structure comprises 213 residues: FMN-dependent NADH:quinone oxidoreductase 3 (213 aa).

FMN is bound by residues S10, 16–18, and 96–99; these read SVS and MYNF.

It belongs to the azoreductase type 1 family. Homodimer. FMN serves as cofactor.

It catalyses the reaction 2 a quinone + NADH + H(+) = 2 a 1,4-benzosemiquinone + NAD(+). The enzyme catalyses N,N-dimethyl-1,4-phenylenediamine + anthranilate + 2 NAD(+) = 2-(4-dimethylaminophenyl)diazenylbenzoate + 2 NADH + 2 H(+). In terms of biological role, quinone reductase that provides resistance to thiol-specific stress caused by electrophilic quinones. Shows a preference for naphthoquinones such as plumbagin. Functionally, also exhibits azoreductase activity. Catalyzes the reductive cleavage of the azo bond in aromatic azo compounds to the corresponding amines. Preferred substrates are methyl red, amaranth and p-aminoazobenzene sulfonamide (PAABSA). The polypeptide is FMN-dependent NADH:quinone oxidoreductase 3 (Pseudomonas aeruginosa (strain ATCC 15692 / DSM 22644 / CIP 104116 / JCM 14847 / LMG 12228 / 1C / PRS 101 / PAO1)).